The primary structure comprises 400 residues: Apolipoprotein N-acyltransferase (400 aa).

The next 5 helical transmembrane spans lie at 16–36, 42–62, 67–87, 97–117, and 123–143; these read AISPLLVSLLGLFSIASVLFV, FGVGFFIGMLWFYWISLGLRY, FLIPLVVIACGIFMGFVFYIG, FAFLLLLSYLTPFGFDWIVPE, and SYIGVDKLSFALSILALWILF. A CN hydrolase domain is found at 181 to 400; the sequence is AQSAVSQDFD…AIITPFVSSR (220 aa). The active-site Proton acceptor is E222. K283 is a catalytic residue. The active-site Nucleophile is the C332. A helical membrane pass occupies residues 377 to 397; that stretch reads YGSVIFHATNLSPAAIITPFV.

Belongs to the CN hydrolase family. Apolipoprotein N-acyltransferase subfamily.

It localises to the cell inner membrane. The catalysed reaction is N-terminal S-1,2-diacyl-sn-glyceryl-L-cysteinyl-[lipoprotein] + a glycerophospholipid = N-acyl-S-1,2-diacyl-sn-glyceryl-L-cysteinyl-[lipoprotein] + a 2-acyl-sn-glycero-3-phospholipid + H(+). Its pathway is protein modification; lipoprotein biosynthesis (N-acyl transfer). Catalyzes the phospholipid dependent N-acylation of the N-terminal cysteine of apolipoprotein, the last step in lipoprotein maturation. The protein is Apolipoprotein N-acyltransferase of Helicobacter hepaticus (strain ATCC 51449 / 3B1).